A 354-amino-acid polypeptide reads, in one-letter code: UDP-3-O-acylglucosamine N-acyltransferase (354 aa).

His-257 acts as the Proton acceptor in catalysis.

Belongs to the transferase hexapeptide repeat family. LpxD subfamily. Homotrimer.

The catalysed reaction is a UDP-3-O-[(3R)-3-hydroxyacyl]-alpha-D-glucosamine + a (3R)-hydroxyacyl-[ACP] = a UDP-2-N,3-O-bis[(3R)-3-hydroxyacyl]-alpha-D-glucosamine + holo-[ACP] + H(+). It functions in the pathway bacterial outer membrane biogenesis; LPS lipid A biosynthesis. Functionally, catalyzes the N-acylation of UDP-3-O-acylglucosamine using 3-hydroxyacyl-ACP as the acyl donor. Is involved in the biosynthesis of lipid A, a phosphorylated glycolipid that anchors the lipopolysaccharide to the outer membrane of the cell. The protein is UDP-3-O-acylglucosamine N-acyltransferase of Rhizobium johnstonii (strain DSM 114642 / LMG 32736 / 3841) (Rhizobium leguminosarum bv. viciae).